Here is a 407-residue protein sequence, read N- to C-terminus: Myeloid cell nuclear differentiation antigen (407 aa).

A Pyrin domain is found at 1–88 (MVNEYKKILL…VNNLRKEKSK (88 aa)). Positions 108–207 (EVGLAAPAPT…RQVDARRNVP (100 aa)) are disordered. Residues 131–137 (PVAQKRK) carry the Nuclear localization signal motif. Residues 139–148 (PNKEKTEAKR) are compositionally biased toward basic and acidic residues. Over residues 177–190 (QTSSSTPSNTSFTP) the composition is skewed to low complexity. Positions 196–394 (AQRQVDARRN…CGSHSFIKVI (199 aa)) constitute an HIN-200 domain.

In terms of assembly, participates in a ternary complex with YY1 and the YY1 target DNA element. Binds nucleolin and nucleophosmin/NPM/B23. In terms of tissue distribution, expressed constitutively in cells of the myeloid lineage. Found in promyelocyte stage cells as well as in all other stage cells including peripheral blood monocytes and granulocytes. Also appears in myeloblast cells in some cases of acute myeloid Leukemia.

The protein localises to the nucleus. It localises to the cytoplasm. In terms of biological role, may act as a transcriptional activator/repressor in the myeloid lineage. Plays a role in the granulocyte/monocyte cell-specific response to interferon. Stimulates the DNA binding of the transcriptional repressor protein YY1. The protein is Myeloid cell nuclear differentiation antigen (MNDA) of Homo sapiens (Human).